The primary structure comprises 88 residues: Small ribosomal subunit protein uS15 (88 aa).

Belongs to the universal ribosomal protein uS15 family. As to quaternary structure, part of the 30S ribosomal subunit. Forms a bridge to the 50S subunit in the 70S ribosome, contacting the 23S rRNA.

One of the primary rRNA binding proteins, it binds directly to 16S rRNA where it helps nucleate assembly of the platform of the 30S subunit by binding and bridging several RNA helices of the 16S rRNA. Functionally, forms an intersubunit bridge (bridge B4) with the 23S rRNA of the 50S subunit in the ribosome. The sequence is that of Small ribosomal subunit protein uS15 from Leptospira biflexa serovar Patoc (strain Patoc 1 / Ames).